The sequence spans 96 residues: Protein transport protein Sec61 subunit beta (96 aa).

Positions 1-17 are enriched in polar residues; it reads MPGPTPSGTNVGSSGRS. The disordered stretch occupies residues 1-54; that stretch reads MPGPTPSGTNVGSSGRSPSKAVAARAAGSTVRQRKNASCGTRSAGRTTSAGTGG. Residue Pro-2 is modified to N-acetylproline. At 2-71 the chain is on the cytoplasmic side; sequence PGPTPSGTNV…DSPGLKVGPV (70 aa). Ser-7 is subject to Phosphoserine. Thr-9 is modified (phosphothreonine). Ser-13, Ser-14, and Ser-17 each carry phosphoserine. The S-palmitoyl cysteine moiety is linked to residue Cys-39. Over residues 40–50 the composition is skewed to low complexity; the sequence is GTRSAGRTTSA. A helical membrane pass occupies residues 72 to 91; the sequence is PVLVMSLLFIASVFMLHIWG. The Lumenal segment spans residues 92–96; the sequence is KYTRS.

It belongs to the SEC61-beta family. As to quaternary structure, the SEC61 channel-forming translocon complex consists of channel-forming core components SEC61A1, SEC61B and SEC61G and different auxiliary components such as SEC62 and SEC63. The SEC61 channel associates with the multi-pass translocon (MPT) complex. Interacts with TRAM1.

Its subcellular location is the endoplasmic reticulum membrane. Its function is as follows. Component of SEC61 channel-forming translocon complex that mediates transport of signal peptide-containing precursor polypeptides across the endoplasmic reticulum (ER). Forms a ribosome receptor and a gated pore in the ER membrane, both functions required for cotranslational translocation of nascent polypeptides. The SEC61 channel is also involved in ER membrane insertion of transmembrane proteins: it mediates membrane insertion of the first few transmembrane segments of proteins, while insertion of subsequent transmembrane regions of multi-pass membrane proteins is mediated by the multi-pass translocon (MPT) complex. The SEC61 channel cooperates with the translocating protein TRAM1 to import nascent proteins into the ER. This Canis lupus familiaris (Dog) protein is Protein transport protein Sec61 subunit beta (SEC61B).